The chain runs to 499 residues: Maturase K (499 aa).

It belongs to the intron maturase 2 family. MatK subfamily.

It is found in the plastid. The protein localises to the chloroplast. In terms of biological role, usually encoded in the trnK tRNA gene intron. Probably assists in splicing its own and other chloroplast group II introns. The polypeptide is Maturase K (Gymnocladus chinensis (Soap tree)).